We begin with the raw amino-acid sequence, 315 residues long: Acyl transferase (315 aa).

Residues serine 116, aspartate 213, and histidine 243 each act as charge relay system in the active site.

Belongs to the LuxD family.

Its pathway is lipid metabolism; fatty acid reduction for biolumincescence. Acyl transferase is part of the fatty acid reductase system required for aldehyde biosynthesis; it produces fatty acids for the luminescent reaction. This is Acyl transferase from Photobacterium leiognathi.